Consider the following 800-residue polypeptide: MSRRRAHDTEDEGYDHRRNKRRRVSENQEIEDRLESLILRVGERSTSSVESNLEGLVSVLEADLGTFRLKILRILSDCAVRMPEKCTVYTTLVGLLNAKNYKFGGEFVDHMVKTFKESLKMCRWDAARYSLRFLADLVNCHVISATSLLQLLDTMIDVSNEDTVPQVRRDWFVFAVLSTLPWVGRDLYEKKESALESLLLRIEVYLNKRSKKHHNALRVWSSDAPHPQEEYLDCLWAQIRKLRQDNWAEKHIPRPYLVFDSILCEALQHNLPTIVPPPHHDNFEYPMPWVVYRMFDYTDCPDGPNLPGAHSIERFLIEEHLHHIIETYHHERKDCAAQLLSFPYKHKIPLEYCIVEVVFAELFHMPTPRYLDICYGSILIELCKLQPATLPQVLAQATEILFMRIDSMNTSCFDRFVNWFSYHLSNFKFTWSWDEWDSWLLLDGEHPRPKFIQEVLQKCLRLSYHQRITEMMPTTYAKLIPLTPVPNYKYANEEAASLPGTTVAHQLVVAIRQKCTPEEVVNILKDIPNSGYSGEEMSDGSFNALKIDVFVQTLLNLGSKSFSHSFAAISKFHSVFRALAETEEAQICILHNIFELWSSHQQMMVVLIDKLLKLQIVDCSAVATWIFSKEMTGEFTKLYLWEILHLTIKKMNKHVIKLNSELSEAKDKLAKADSSSSDSEDDSSHKRKKPITHADKPSEEVVERMEEKLEAANVNQKRLFLIVFQRFIMILSEHLLRSDTDGRDPDTDWYRWTIGRLQQVFLMHHEQVQKYSSTLETLLFTSDLDTHILEVFQQFVALRA.

Positions methionine 1 to glutamate 26 are disordered. Phosphothreonine is present on threonine 9. Positions glutamate 31–arginine 243 constitute an MIF4G domain. The disordered stretch occupies residues leucine 669 to glutamate 700.

Belongs to the NCBP1 family. As to quaternary structure, component of the nuclear cap-binding complex (CBC), a heterodimer composed of Cbp80 and Cbp20 that interacts with m7GpppG-capped RNA.

It is found in the nucleus. Its function is as follows. Component of the cap-binding complex (CBC), which binds cotranscriptionally to the 5'-cap of pre-mRNAs and is involved in various processes such as pre-mRNA splicing and RNA-mediated gene silencing (RNAi). The CBC complex is involved in miRNA-mediated RNA interference via its interaction with Ars2 and is required for primary microRNAs (miRNAs) processing. Also involved in innate immunity via the short interfering RNAs (siRNAs) processing machinery by restricting the viral RNA production. In the CBC complex, Cbp80 does not bind directly capped RNAs (m7GpppG-capped RNA) but is required to stabilize the movement of the N-terminal loop of Cbp20 and lock the CBC into a high affinity cap-binding state with the cap structure. The polypeptide is Nuclear cap-binding protein subunit 1 (Cbp80) (Drosophila sechellia (Fruit fly)).